A 441-amino-acid polypeptide reads, in one-letter code: MADEERDAGLSAADDETDASDDTDQRSSDGDADDADDASSSSDGPVYGRVTPRDETVTHGSDDDASADVAAETGDNGDDSDSDTDAAPDDADDSATDSDADSDDEPRLLADDEHTSHVPEGTYDDSSDESADDVDPDAAADGASPALTGEDEMGGVAPSSVSAEDADFDDEDVGGLVGEAPESDQEMPLTAHIEEMIRRLAVVLGVAGAITLVLFPGADILNALVDTQAAFGVHIPSATDVINFLWNSHIPGAETIVDRRPRLYGPLELILTKLKVAGLAGTVIGLPVFVYETYLFMRPGLYPKERKYYLAAVPTSLVLALVGVLFAHFVVLPAIFAYFTSYTEGTAVVAFGLKETFNLILILMGYMAVVFQIPLFVELAIMMNLVTRRWLEDRRLLFWGAFLGLAFLVSPDPTGMAPIIIGATMITLFEGTLAALRWTGN.

A disordered region spans residues 1–185 (MADEERDAGL…LVGEAPESDQ (185 aa)). The segment covering 13–22 (ADDETDASDD) has biased composition (acidic residues). Residues 51–62 (TPRDETVTHGSD) are compositionally biased toward basic and acidic residues. The span at 75–104 (DNGDDSDSDTDAAPDDADDSATDSDADSDD) shows a compositional bias: acidic residues. Positions 105-117 (EPRLLADDEHTSH) are enriched in basic and acidic residues. 2 stretches are compositionally biased toward acidic residues: residues 122–138 (TYDD…DPDA) and 164–173 (EDADFDDEDV). 6 helical membrane passes run 200-220 (LAVV…GADI), 276-296 (VAGL…TYLF), 317-337 (LVLA…AIFA), 357-377 (FNLI…PLFV), 395-415 (RLLF…DPTG), and 416-436 (MAPI…LAAL).

This sequence belongs to the TatC family. Forms a complex with TatA.

Its subcellular location is the cell membrane. Its function is as follows. Part of the twin-arginine translocation (Tat) system that transports large folded proteins containing a characteristic twin-arginine motif in their signal peptide across membranes. This is Sec-independent protein translocase protein TatCo from Haloferax volcanii (strain ATCC 29605 / DSM 3757 / JCM 8879 / NBRC 14742 / NCIMB 2012 / VKM B-1768 / DS2) (Halobacterium volcanii).